The sequence spans 158 residues: Large ribosomal subunit protein eL20z (158 aa).

This sequence belongs to the eukaryotic ribosomal protein eL20 family.

This chain is Large ribosomal subunit protein eL20z (RPL18A1), found in Arabidopsis thaliana (Mouse-ear cress).